A 250-amino-acid chain; its full sequence is NAD(P)H-quinone oxidoreductase subunit K (250 aa).

The [4Fe-4S] cluster site is built by cysteine 63, cysteine 64, cysteine 128, and cysteine 159.

This sequence belongs to the complex I 20 kDa subunit family. NDH-1 can be composed of about 15 different subunits; different subcomplexes with different compositions have been identified which probably have different functions. [4Fe-4S] cluster is required as a cofactor.

It is found in the cellular thylakoid membrane. The enzyme catalyses a plastoquinone + NADH + (n+1) H(+)(in) = a plastoquinol + NAD(+) + n H(+)(out). It carries out the reaction a plastoquinone + NADPH + (n+1) H(+)(in) = a plastoquinol + NADP(+) + n H(+)(out). NDH-1 shuttles electrons from an unknown electron donor, via FMN and iron-sulfur (Fe-S) centers, to quinones in the respiratory and/or the photosynthetic chain. The immediate electron acceptor for the enzyme in this species is believed to be plastoquinone. Couples the redox reaction to proton translocation, and thus conserves the redox energy in a proton gradient. Cyanobacterial NDH-1 also plays a role in inorganic carbon-concentration. The sequence is that of NAD(P)H-quinone oxidoreductase subunit K from Rippkaea orientalis (strain PCC 8801 / RF-1) (Cyanothece sp. (strain PCC 8801)).